A 367-amino-acid polypeptide reads, in one-letter code: THO complex subunit 6 (367 aa).

WD repeat units follow at residues I23–A67, A88–V129, S157–T196, G199–G240, D243–T283, P285–I322, and C324–R363.

Belongs to the WD repeat THOC6 family. As to quaternary structure, component of the THO complex, which is composed of THO1, THO2, THO3, THO5, THO6 and THO7. Interacts with ABI5, DDB1A and DWA2.

The protein localises to the nucleus. It functions in the pathway protein modification; protein ubiquitination. Functionally, acts as a component of the THO subcomplex of the TREX complex which is thought to couple mRNA transcription, processing and nuclear export. Component of the CUL4-RBX1-DDB1-DWA1/DWA2 E3 ubiquitin-protein ligase complex that acts as a negative regulator in abscisic acid (ABA) signaling. May function as the substrate recognition module within this complex leading to ABI5 degradation. Functionally redundant with DWA2. This is THO complex subunit 6 (THO6) from Arabidopsis thaliana (Mouse-ear cress).